The sequence spans 287 residues: Xyloglucan endotransglucosylase protein 1 (287 aa).

Residues 1–28 (MAFMSFINGFSTLFLVALLASSMMAAKG) form the signal peptide. The 191-residue stretch at 29 to 219 (GNFYQDFDVT…WTKAPFTAYY (191 aa)) folds into the GH16 domain. The Nucleophile role is filled by Glu-105. The Proton donor role is filled by Glu-109. Position 109 (Glu-109) interacts with xyloglucan. The N-linked (GlcNAc...) asparagine glycan is linked to Asn-113. Xyloglucan is bound by residues 122–124 (HTN), 132–134 (NRE), 198–199 (DW), and Gly-203. 2 disulfides stabilise this stretch: Cys-227/Cys-231 and Cys-266/Cys-280. Arg-271 contributes to the xyloglucan binding site.

This sequence belongs to the glycosyl hydrolase 16 family. XTH group 2 subfamily. In terms of processing, contains at least one intrachain disulfide bond essential for its enzymatic activity. Expressed in fruit pulp. Expressed in leaves, flowers, calyces, stems and fruits. Highest expression in leaves and lowest in fruits.

It is found in the secreted. It localises to the cell wall. Its subcellular location is the extracellular space. The protein localises to the apoplast. It carries out the reaction breaks a beta-(1-&gt;4) bond in the backbone of a xyloglucan and transfers the xyloglucanyl segment on to O-4 of the non-reducing terminal glucose residue of an acceptor, which can be a xyloglucan or an oligosaccharide of xyloglucan.. Its function is as follows. Catalyzes xyloglucan endotransglycosylation (XET). Cleaves and religates xyloglucan polymers. Does not catalyze xyloglucan endohydrolysis (XEH). Overexpression in Arabidopsis transgenic plants results in elevated tolerance to abiotic stress, such as salt, ABA (abscisic acid) and drought stresses, and in the production of wider leaves. Overexpression in transgenic tomato plants slows down fruit ripening and softening, and the plants produce larger fruits. Both transgenic plants have larger and more irregular cells. Moreover, the fruits of the transgenic tomato have higher density of cell wall and intercellular spaces. May provide cells with more strength and thickness to maintain structural integrity. Probably involved in cell wall assembly and synthesis in fast growing tissues and in the maintenance of firmness in mature fruits. This chain is Xyloglucan endotransglucosylase protein 1, found in Diospyros kaki (Kaki persimmon).